The chain runs to 95 residues: Large ribosomal subunit protein bL27 (95 aa).

The tract at residues 1-25 (MAHKKGTGSTRNGRDSNAQRLGVKR) is disordered. Residues 7 to 19 (TGSTRNGRDSNAQ) show a composition bias toward polar residues.

This sequence belongs to the bacterial ribosomal protein bL27 family.

In Gloeobacter violaceus (strain ATCC 29082 / PCC 7421), this protein is Large ribosomal subunit protein bL27.